A 1538-amino-acid chain; its full sequence is Myosin-9 (1538 aa).

Residues S16 to V65 form the Myosin N-terminal SH3-like domain. Positions G70–A740 constitute a Myosin motor domain. ATP contacts are provided by residues G164 to T171 and N217 to K225. Actin-binding regions lie at residues L503 to F537, T539 to V562, F597 to L621, and L621 to N643. IQ domains are found at residues L743–S772, L766–A795, R791–V820, L814–A843, Q839–L868, and L862–E891. A coiled-coil region spans residues T892 to A1064. Residues S1017–G1032 show a composition bias toward basic and acidic residues. Disordered stretches follow at residues S1017–R1041 and S1098–Q1121. The region spanning D1168–E1481 is the Dilute domain.

It belongs to the TRAFAC class myosin-kinesin ATPase superfamily. Myosin family. Plant myosin class XI subfamily. Homodimer.

In terms of biological role, myosin heavy chain that is required for the cell cycle-regulated transport of various organelles and proteins for their segregation. Functions by binding with its tail domain to receptor proteins on organelles and exerting force with its N-terminal motor domain against actin filaments, thereby transporting its cargo along polarized actin cables. Involved in trafficking of Golgi stacks and mitochondria. The chain is Myosin-9 (XI-C) from Arabidopsis thaliana (Mouse-ear cress).